A 173-amino-acid chain; its full sequence is MIDSESLIPVGKLVATHGIRGMLKLHSYSGSVESLCTCDSVILRSRDGALNRFEPKPVLPRPGKFLIGFKGVDHIDQAQTLVGSEICLRRDQLPEPEEDEYYWCDLIGLEVATVEGMALGVLEEIFKAGSSDIYVVRGAGREYLIPAIADVIHSVDLEMGRMLITPLEGLLDL.

The PRC barrel domain occupies 98–170 (EDEYYWCDLI…RMLITPLEGL (73 aa)).

Belongs to the RimM family. As to quaternary structure, binds ribosomal protein uS19.

It is found in the cytoplasm. Functionally, an accessory protein needed during the final step in the assembly of 30S ribosomal subunit, possibly for assembly of the head region. Essential for efficient processing of 16S rRNA. May be needed both before and after RbfA during the maturation of 16S rRNA. It has affinity for free ribosomal 30S subunits but not for 70S ribosomes. This Pelobacter propionicus (strain DSM 2379 / NBRC 103807 / OttBd1) protein is Ribosome maturation factor RimM.